Reading from the N-terminus, the 271-residue chain is 2-aminophenol 1,6-dioxygenase alpha subunit (271 aa).

The protein belongs to the LigB/MhpB extradiol dioxygenase family. In terms of assembly, heterotetramer of 2 alpha and 2 beta subunits.

Component of the 2-aminophenol 1,6-dioxygenase complex that catalyzes the ring fission of 2-aminophenol to produce 2-aminomuconic 6-semialdehyde. AmnA seems to have a role in the stability of the complex. In Pseudomonas sp, this protein is 2-aminophenol 1,6-dioxygenase alpha subunit (amnA).